Here is a 279-residue protein sequence, read N- to C-terminus: Large ribosomal subunit protein uL2 (279 aa).

Residues 223-279 (PVAMNPVDHPMGGGEGRASGGHPRSRKGLPAKGFKTRSRTKASNKYIVERRKTRKKK) are disordered. A compositionally biased stretch (basic residues) spans 245–264 (PRSRKGLPAKGFKTRSRTKA).

This sequence belongs to the universal ribosomal protein uL2 family. In terms of assembly, part of the 50S ribosomal subunit. Forms a bridge to the 30S subunit in the 70S ribosome.

Its function is as follows. One of the primary rRNA binding proteins. Required for association of the 30S and 50S subunits to form the 70S ribosome, for tRNA binding and peptide bond formation. It has been suggested to have peptidyltransferase activity; this is somewhat controversial. Makes several contacts with the 16S rRNA in the 70S ribosome. This chain is Large ribosomal subunit protein uL2, found in Christiangramia forsetii (strain DSM 17595 / CGMCC 1.15422 / KT0803) (Gramella forsetii).